Here is a 21-residue protein sequence, read N- to C-terminus: Thioredoxin (21 aa).

Lys3 carries the post-translational modification N6-acetyllysine. Lys8 carries the post-translational modification N6-succinyllysine.

The protein belongs to the thioredoxin family. As to quaternary structure, homodimer; disulfide-linked. Interacts with TXNIP through the redox-active site. Interacts with MAP3K5 and CASP3. Interacts with APEX1; the interaction stimulates the FOS/JUN AP-1 DNA-binding activity in a redox-dependent manner.

Its subcellular location is the nucleus. The protein resides in the cytoplasm. It localises to the secreted. Functionally, participates in various redox reactions through the reversible oxidation of its active center dithiol to a disulfide and catalyzes dithiol-disulfide exchange reactions. Plays a role in the reversible S-nitrosylation of cysteine residues in target proteins, and thereby contributes to the response to intracellular nitric oxide. Nitrosylates the active site Cys of CASP3 in response to nitric oxide (NO), and thereby inhibits caspase-3 activity. Induces the FOS/JUN AP-1 DNA binding activity in ionizing radiation (IR) cells through its oxidation/reduction status and stimulates AP-1 transcriptional activity. The chain is Thioredoxin (TXN) from Canis lupus familiaris (Dog).